The chain runs to 178 residues: Ribosome maturation factor RimM (178 aa).

The 79-residue stretch at 100-178 (TDGEYYWYQL…EMKVEWDADF (79 aa)) folds into the PRC barrel domain.

Belongs to the RimM family. As to quaternary structure, binds ribosomal protein uS19.

It localises to the cytoplasm. Functionally, an accessory protein needed during the final step in the assembly of 30S ribosomal subunit, possibly for assembly of the head region. Essential for efficient processing of 16S rRNA. May be needed both before and after RbfA during the maturation of 16S rRNA. It has affinity for free ribosomal 30S subunits but not for 70S ribosomes. The polypeptide is Ribosome maturation factor RimM (Pseudomonas fluorescens (strain SBW25)).